The primary structure comprises 156 residues: Small ribosomal subunit protein uS7 (156 aa).

It belongs to the universal ribosomal protein uS7 family. In terms of assembly, part of the 30S ribosomal subunit. Contacts proteins S9 and S11.

Its function is as follows. One of the primary rRNA binding proteins, it binds directly to 16S rRNA where it nucleates assembly of the head domain of the 30S subunit. Is located at the subunit interface close to the decoding center, probably blocks exit of the E-site tRNA. The polypeptide is Small ribosomal subunit protein uS7 (Photobacterium profundum (strain SS9)).